A 341-amino-acid polypeptide reads, in one-letter code: Phenylalanine--tRNA ligase alpha subunit (341 aa).

Glu-256 contacts Mg(2+).

This sequence belongs to the class-II aminoacyl-tRNA synthetase family. Phe-tRNA synthetase alpha subunit type 1 subfamily. Tetramer of two alpha and two beta subunits. Mg(2+) serves as cofactor.

The protein localises to the cytoplasm. The enzyme catalyses tRNA(Phe) + L-phenylalanine + ATP = L-phenylalanyl-tRNA(Phe) + AMP + diphosphate + H(+). The sequence is that of Phenylalanine--tRNA ligase alpha subunit from Leptospira interrogans serogroup Icterohaemorrhagiae serovar Lai (strain 56601).